The chain runs to 195 residues: MSYLVPIVIEQTSRGERSYDIWSRLLKDRTIFIGGPIDDHVANLVIAQMLFLEAEDPEKDIHLYINSPGGVITAGMAIYDTMQYIKPDVSTICIGQAASMGAFLLAAGAKGKRFSLPYARIMIHQPLGGVQGQATDIDIHAREILRMRDMLNELLTKHTGQPKEKIERDTERDFFMSAAEAKEYGIIDEVITVRK.

S99 serves as the catalytic Nucleophile. The active site involves H124.

This sequence belongs to the peptidase S14 family. In terms of assembly, fourteen ClpP subunits assemble into 2 heptameric rings which stack back to back to give a disk-like structure with a central cavity, resembling the structure of eukaryotic proteasomes.

The protein resides in the cytoplasm. The catalysed reaction is Hydrolysis of proteins to small peptides in the presence of ATP and magnesium. alpha-casein is the usual test substrate. In the absence of ATP, only oligopeptides shorter than five residues are hydrolyzed (such as succinyl-Leu-Tyr-|-NHMec, and Leu-Tyr-Leu-|-Tyr-Trp, in which cleavage of the -Tyr-|-Leu- and -Tyr-|-Trp bonds also occurs).. Its function is as follows. Cleaves peptides in various proteins in a process that requires ATP hydrolysis. Has a chymotrypsin-like activity. Plays a major role in the degradation of misfolded proteins. The sequence is that of ATP-dependent Clp protease proteolytic subunit from Carboxydothermus hydrogenoformans (strain ATCC BAA-161 / DSM 6008 / Z-2901).